The chain runs to 223 residues: Neurotrophic factor BDNF precursor form (223 aa).

A signal peptide spans 1–5 (SCMKA). Residues 6 to 114 (APMKEVGVRG…AANMSXRVRR (109 aa)) constitute a propeptide that is removed on maturation. An N-linked (GlcNAc...) asparagine glycan is attached at Asn-107. 2 disulfides stabilise this stretch: Cys-127–Cys-194 and Cys-172–Cys-223.

It belongs to the NGF-beta family.

It localises to the secreted. In terms of biological role, promotes the survival of neuronal populations that are all located either in the central nervous system or directly connected to it. In Eryx jayakari (Arabian sand boa), this protein is Neurotrophic factor BDNF precursor form (BDNF).